Reading from the N-terminus, the 288-residue chain is MSSRKQASQTRGQQSAEEDNFKKPTRSNMQRSKMRGAASGKKSAGSQPKNLDPALPGRWGGRSAENPPSGSVRKTRKNKQKTPGNGDGGSTSEVPQPPRKKRARADPTVESEEAFKSRMEVKVKIPEELKPWLVEDWDLVTRQKQLFQLPAKKNVDAILEEYANCKKSQGNVDNKEYAVNEVVGGIKEYFNVMLGTQLLYKFERPQYAEILLAHPDAPMSQIYGAPHLLRLFVRIGAMLAYTPLDEKSLALLLGYLHDFLKYLAKNSASLFTASDYKVASADYHRKAL.

Positions 1–15 are enriched in polar residues; the sequence is MSSRKQASQTRGQQS. Positions 1 to 115 are disordered; it reads MSSRKQASQT…DPTVESEEAF (115 aa). Serine 71 bears the Phosphoserine mark. The 172-residue stretch at 117-288 folds into the MRG domain; that stretch reads SRMEVKVKIP…ASADYHRKAL (172 aa).

Component of the NuA4 histone acetyltransferase complex which contains the catalytic subunit KAT5/TIP60 and the subunits EP400, TRRAP/PAF400, BRD8/SMAP, EPC1, DMAP1/DNMAP1, RUVBL1/TIP49, RUVBL2, ING3, actin, ACTL6A/BAF53A, MORF4L1/MRG15, MORF4L2/MRGX, MRGBP, YEATS4/GAS41 and VPS72/YL1. The NuA4 complex interacts with MYC and the adenovirus E1A protein. MORF4L1 may also participate in the formation of NuA4 related complexes which lack the KAT5/TIP60 catalytic subunit, but which include the SWI/SNF related protein SRCAP. Component of the MSIN3A histone deacetylase complex, which includes SIN3A, HDAC2, ARID4B, MORF4L1, RBBP4/RbAp48, and RBBP7/RbAp46. Interacts with MRFAP1 and RB1. May also interact with one or more as yet undefined members of the TLE (transducin-like enhancer of split) family of transcriptional repressors.

It is found in the nucleus. Component of the NuA4 histone acetyltransferase complex which is involved in transcriptional activation of select genes principally by acetylation of nucleosomal histone H4 and H2A. This modification may both alter nucleosome - DNA interactions and promote interaction of the modified histones with other proteins which positively regulate transcription. This complex may be required for the activation of transcriptional programs associated with oncogene and proto-oncogene mediated growth induction, tumor suppressor mediated growth arrest and replicative senescence, apoptosis, and DNA repair. The NuA4 complex ATPase and helicase activities seem to be, at least in part, contributed by the association of RUVBL1 and RUVBL2 with EP400. NuA4 may also play a direct role in DNA repair when directly recruited to sites of DNA damage. Also a component of the MSIN3A complex which acts to repress transcription by deacetylation of nucleosomal histones. The chain is Mortality factor 4-like protein 2 (Morf4l2) from Rattus norvegicus (Rat).